The following is a 333-amino-acid chain: tRNA N6-adenosine threonylcarbamoyltransferase (333 aa).

Fe cation contacts are provided by H111 and H115. Residues 134-138 (LVSGG), D167, G180, and N272 each bind substrate. D300 contributes to the Fe cation binding site.

This sequence belongs to the KAE1 / TsaD family. Fe(2+) serves as cofactor.

Its subcellular location is the cytoplasm. The catalysed reaction is L-threonylcarbamoyladenylate + adenosine(37) in tRNA = N(6)-L-threonylcarbamoyladenosine(37) in tRNA + AMP + H(+). Required for the formation of a threonylcarbamoyl group on adenosine at position 37 (t(6)A37) in tRNAs that read codons beginning with adenine. Is involved in the transfer of the threonylcarbamoyl moiety of threonylcarbamoyl-AMP (TC-AMP) to the N6 group of A37, together with TsaE and TsaB. TsaD likely plays a direct catalytic role in this reaction. The sequence is that of tRNA N6-adenosine threonylcarbamoyltransferase from Legionella pneumophila subsp. pneumophila (strain Philadelphia 1 / ATCC 33152 / DSM 7513).